Here is a 308-residue protein sequence, read N- to C-terminus: Ribosomal RNA large subunit methyltransferase F (308 aa).

The protein belongs to the methyltransferase superfamily. METTL16/RlmF family.

The protein resides in the cytoplasm. It catalyses the reaction adenosine(1618) in 23S rRNA + S-adenosyl-L-methionine = N(6)-methyladenosine(1618) in 23S rRNA + S-adenosyl-L-homocysteine + H(+). Specifically methylates the adenine in position 1618 of 23S rRNA. This chain is Ribosomal RNA large subunit methyltransferase F, found in Escherichia coli O157:H7.